Here is a 260-residue protein sequence, read N- to C-terminus: Methionine-rich nacre protein (260 aa).

The first 19 residues, 1–19 (MRRILCLAVVIFIINDVSS), serve as a signal peptide directing secretion. The segment at 23–75 (GSNKNWKKSGMSLSSPGNKKPTGNNNAVPQKSKMNNVNQNSLSQPKRPSHPGN) is disordered. The segment covering 33–68 (MSLSSPGNKKPTGNNNAVPQKSKMNNVNQNSLSQPK) has biased composition (polar residues).

As to expression, expressed in mantle distal zone, mantle margin and grafted pearl pockets. Not expressed in adductor muscle, gills, hemocytes or ungrafted pearl pockets. Within the mantle, specifically expressed in mineralizing outer epithelium cells (at protein level). After secretion incorporated into acid-insoluble nacre matrix of shell and pearl (at protein level). Not found in acid-insoluble matrix of shell prisms (at protein level).

It is found in the secreted. This is Methionine-rich nacre protein from Margaritifera margaritifera (Freshwater pearl mussel).